A 91-amino-acid polypeptide reads, in one-letter code: uncharacterized protein (91 aa).

The protein resides in the plastid. It localises to the cyanelle. This is an uncharacterized protein from Cyanophora paradoxa.